We begin with the raw amino-acid sequence, 134 residues long: MTDAFQKLFQQMLQSGQEMARAFNPALEHFDMRAMEKLVPTIPADMLEMWFGKTFNREGLDAKTRLLLTIGAITVQGALAEPQLRMTVRQALAAGATKREIAETIFQMSMFGGLPAMQKALEIAQSVYAEEDEE.

The protein localises to the cell membrane. Functionally, may have a role in the regulation of NDH-1 biosynthesis. This is an uncharacterized protein from Paracoccus denitrificans.